The sequence spans 314 residues: Olfactory receptor 1E1 (314 aa).

Residues 1–25 (MMGQNQTSISDFLLLGLPIQPEQQN) lie on the Extracellular side of the membrane. An N-linked (GlcNAc...) asparagine glycan is attached at Asn-5. A helical transmembrane segment spans residues 26–49 (LCYALFLAMYLTTLLGNLLIIVLI). The Cytoplasmic portion of the chain corresponds to 50–57 (RLDSHLHT). Residues 58 to 79 (PMYLFLSNLSFSDLCFSSVTIP) form a helical membrane-spanning segment. The Extracellular segment spans residues 80–100 (KLLQNMQNQDPSIPYADCLTQ). Cysteines 97 and 189 form a disulfide. The helical transmembrane segment at 101–120 (MYFFLLFGDLESFLLVAMAY) threads the bilayer. The Cytoplasmic portion of the chain corresponds to 121–139 (DRYVAICFALHYTAIMSPM). Residues 140-158 (LCLSLVALSWVLTTFHAML) traverse the membrane as a helical segment. Residues 159–195 (HTLLMARLCFCADNVIPHFFCDMSALLKLACSDTRVN) are Extracellular-facing. The helical transmembrane segment at 196–219 (EWVIFIMGGLIVVIPFLLILGSYA) threads the bilayer. The Cytoplasmic segment spans residues 220–236 (RIVSSILKVPSSKGICK). A helical membrane pass occupies residues 237–259 (AFSTCGSHLSVVSLFYGTVIGLY). The Extracellular segment spans residues 260–272 (LCPSANSSTLKET). The chain crosses the membrane as a helical span at residues 273-292 (VMAMMYTVVTPMLNPFIYSL). The Cytoplasmic segment spans residues 293-314 (RNGDMKGALSRVIHQKKTFFSL).

This sequence belongs to the G-protein coupled receptor 1 family.

The protein localises to the cell membrane. Its function is as follows. Odorant receptor. This chain is Olfactory receptor 1E1 (OR1E1), found in Gorilla gorilla gorilla (Western lowland gorilla).